A 156-amino-acid chain; its full sequence is Snaclec A12 (156 aa).

The signal sequence occupies residues 1–23 (MGRSISVSFGLLVVFLSLSGTGA). Intrachain disulfides connect Cys27-Cys38, Cys55-Cys148, and Cys123-Cys140. One can recognise a C-type lectin domain in the interval 34-149 (YEGHCYKVFN…CELAYHFICM (116 aa)).

This sequence belongs to the snaclec family. In terms of assembly, heterodimer; disulfide-linked. Expressed by the venom gland.

It localises to the secreted. Interferes with one step of hemostasis (modulation of platelet aggregation, or coagulation cascade, for example). The chain is Snaclec A12 from Macrovipera lebetinus (Levantine viper).